The following is a 509-amino-acid chain: DNA nucleotidylexotransferase (509 aa).

The tract at residues 1-25 (MDPLCTASSGPRKKRPRQVGASMAS) is disordered. The Nuclear localization signal signature appears at 11–17 (PRKKRPR). In terms of domain architecture, BRCT spans 27–124 (PHDIKFQNLV…KPVEITGKHQ (98 aa)). The segment at 151–509 (SQYACQRKTT…DYIEPWERNA (359 aa)) is mediates interaction with DNTTIP2. Residues 258 to 262 (VGLKT) form an involved in DNA binding region. Residues 333-338 (GFRRGK) and 342-345 (HDVD) contribute to the a 2'-deoxyribonucleoside 5'-triphosphate site. Residues D343, D345, and D433 each coordinate Mg(2+). 448-449 (GW) contributes to the a 2'-deoxyribonucleoside 5'-triphosphate binding site.

This sequence belongs to the DNA polymerase type-X family. In terms of assembly, interacts with PRP19 and DNTTIP1. Forms a ternary complex with DNTTIP2 and core histone. Released from this complex by PCNA. Interacts with TRERF1. Mg(2+) serves as cofactor.

It localises to the nucleus. It carries out the reaction DNA(n) + a 2'-deoxyribonucleoside 5'-triphosphate = DNA(n+1) + diphosphate. Template-independent DNA polymerase which catalyzes the random addition of deoxynucleoside 5'-triphosphate to the 3'-end of a DNA initiator. One of the in vivo functions of this enzyme is the addition of nucleotides at the junction (N region) of rearranged Ig heavy chain and T-cell receptor gene segments during the maturation of B- and T-cells. This is DNA nucleotidylexotransferase (DNTT) from Bos taurus (Bovine).